A 510-amino-acid polypeptide reads, in one-letter code: Putative thymidine phosphorylase (510 aa).

Belongs to the thymidine/pyrimidine-nucleoside phosphorylase family. Type 2 subfamily.

It catalyses the reaction thymidine + phosphate = 2-deoxy-alpha-D-ribose 1-phosphate + thymine. In Nitrobacter hamburgensis (strain DSM 10229 / NCIMB 13809 / X14), this protein is Putative thymidine phosphorylase.